Consider the following 562-residue polypeptide: Putative transport protein ETA_21820 (562 aa).

5 helical membrane-spanning segments follow: residues 8-28 (LLIGNHILLLFVVLALGLCLG), 32-52 (LGSVQLGNSIGVLVVSLLLGQ), 66-86 (FMLFIFCVGVEAGPNFFSIFF), 94-114 (MLAIVMVSSAMVLALGLGKLF), and 158-178 (HLSLGYALTYLVGLVSLIFGA). RCK C-terminal domains are found at residues 202 to 288 (LDPD…SFRN) and 290 to 373 (KEVF…RIGF). Helical transmembrane passes span 383–403 (LLAFCAFFILGLMIGMITFQF), 406–426 (FNFGIGNAAGLLFAGIMLGFL), 440–460 (ALTMVKEFGLMVFMAGVGLSA), 473–493 (LLMLGAGLIVSLVPVVICFLF), 503–523 (ALLFGAIMGARTCAPAMEIIS), and 540–560 (AIANVLLTLAGTLIVIIWPIL).

Belongs to the AAE transporter (TC 2.A.81) family. YbjL subfamily.

It localises to the cell membrane. The protein is Putative transport protein ETA_21820 of Erwinia tasmaniensis (strain DSM 17950 / CFBP 7177 / CIP 109463 / NCPPB 4357 / Et1/99).